Here is a 239-residue protein sequence, read N- to C-terminus: Small ribosomal subunit protein uS2 (239 aa).

This sequence belongs to the universal ribosomal protein uS2 family.

The chain is Small ribosomal subunit protein uS2 from Lysinibacillus sphaericus (strain C3-41).